The chain runs to 772 residues: Polyribonucleotide nucleotidyltransferase (772 aa).

Asp-486 and Asp-492 together coordinate Mg(2+). Residues 553-612 (PRIETLQIDKSKIRDVIGTGGKVIREIVATTGAKVDIDDEGLIKISSSDLTQIEAAKNWI) enclose the KH domain. In terms of domain architecture, S1 motif spans 622-690 (GKIYKGKVVN…QRGKVRLSMR (69 aa)). The disordered stretch occupies residues 695 to 772 (ETGAELEDTR…HMPAFLKSDD (78 aa)). A compositionally biased stretch (basic and acidic residues) spans 701 to 760 (EDTRPPREPREPRGDRGDRGDRGDRRGPRGDRGPRREGGDRGPRREGGDRPRRDRDDGPA).

It belongs to the polyribonucleotide nucleotidyltransferase family. Mg(2+) is required as a cofactor.

It is found in the cytoplasm. It carries out the reaction RNA(n+1) + phosphate = RNA(n) + a ribonucleoside 5'-diphosphate. In terms of biological role, involved in mRNA degradation. Catalyzes the phosphorolysis of single-stranded polyribonucleotides processively in the 3'- to 5'-direction. This Novosphingobium aromaticivorans (strain ATCC 700278 / DSM 12444 / CCUG 56034 / CIP 105152 / NBRC 16084 / F199) protein is Polyribonucleotide nucleotidyltransferase.